Here is a 313-residue protein sequence, read N- to C-terminus: PDZ domain-containing protein GIPC2 (313 aa).

Residues 14 to 27 (KETSRLVEGEHTDA) show a composition bias toward basic and acidic residues. The interval 14 to 34 (KETSRLVEGEHTDAAVRSLPS) is disordered. In terms of domain architecture, PDZ spans 117 to 197 (EVNVYKSEDS…EELFTLTLIE (81 aa)).

This sequence belongs to the GIPC family. As to quaternary structure, probably interacts with SEMA5A.

The protein resides in the cytoplasm. The polypeptide is PDZ domain-containing protein GIPC2 (GIPC2) (Bos taurus (Bovine)).